The following is a 224-amino-acid chain: Putative adhesin A1C_06425 (224 aa).

Positions 1-22 (MKKLLLIATTSATILSSSISFA) are cleaved as a signal peptide.

The chain is Putative adhesin A1C_06425 from Rickettsia akari (strain Hartford).